Reading from the N-terminus, the 252-residue chain is Carbohydrate deacetylase (252 aa).

2 residues coordinate Mg(2+): H59 and H122.

The protein belongs to the YdjC deacetylase family. In terms of assembly, homodimer. Requires Mg(2+) as cofactor.

In terms of biological role, probably catalyzes the deacetylation of acetylated carbohydrates an important step in the degradation of oligosaccharides. This chain is Carbohydrate deacetylase, found in Vibrio cholerae serotype O1 (strain ATCC 39315 / El Tor Inaba N16961).